Here is a 389-residue protein sequence, read N- to C-terminus: Large envelope protein (389 aa).

An N-acetylmethionine modification is found at Met1. Gly2 is lipidated: N-myristoyl glycine; by host. A pre-S1 region spans residues 2–108 (GQNLSTSNPL…PPLRNTHPQA (107 aa)). The tract at residues 2–163 (GQNLSTSNPL…FSRIGDPALN (162 aa)) is pre-S. Topologically, residues 2 to 170 (GQNLSTSNPL…ALNMENITSG (169 aa)) are virion surface; in external conformation. Topologically, residues 2-242 (GQNLSTSNPL…PGYRWMCLRR (241 aa)) are intravirion; in internal conformation. Residues 76 to 103 (TLPANPPPASTNRQSGRQPTPLSPPLRN) form a disordered region. Over residues 85-95 (STNRQSGRQPT) the composition is skewed to polar residues. The tract at residues 109 to 163 (MQWNSTTFHQTLQDPRVRGLYLPAGGSSSGTVNPVPTTVSPISSIFSRIGDPALN) is pre-S2. Residues 171–191 (FLGPLLVLQAGFFLLTKILTI) form a helical membrane-spanning segment. Residues 192–242 (PKSLDSWWTSLNFLGGTTVCLGQNSQSPTSNHSPTSCPPTCPGYRWMCLRR) are Intravirion; in external conformation-facing. Residues 243–263 (FIIFLFILLLCLIFLLVLLDY) traverse the membrane as a helical segment. Over 264-337 (QGMLPVCPLI…WASARFSWLS (74 aa)) the chain is Virion surface. N-linked (GlcNAc...) asparagine; by host glycosylation occurs at Asn309. Residues 338 to 358 (LLVPFVQWFVGLSPTVWLLVI) form a helical membrane-spanning segment. Topologically, residues 359-364 (WMMWYW) are intravirion. The helical transmembrane segment at 365–387 (GPKLFTILSPFLPLLPIFFCLWV) threads the bilayer. Residues 388 to 389 (YI) are Virion surface-facing.

It belongs to the orthohepadnavirus major surface antigen family. In terms of assembly, in its internal form (Li-HBsAg), interacts with the capsid protein and with the isoform S. Interacts with host chaperone CANX. Associates with host chaperone CANX through its pre-S2 N glycan; this association may be essential for isoform M proper secretion. As to quaternary structure, interacts with isoform L. Interacts with the antigens of satellite virus HDV (HDVAgs); this interaction is required for encapsidation of HDV genomic RNA. Isoform M is N-terminally acetylated by host at a ratio of 90%, and N-glycosylated by host at the pre-S2 region. In terms of processing, myristoylated.

The protein localises to the virion membrane. The large envelope protein exists in two topological conformations, one which is termed 'external' or Le-HBsAg and the other 'internal' or Li-HBsAg. In its external conformation the protein attaches the virus to cell receptors and thereby initiating infection. This interaction determines the species specificity and liver tropism. This attachment induces virion internalization predominantly through caveolin-mediated endocytosis. The large envelope protein also assures fusion between virion membrane and endosomal membrane. In its internal conformation the protein plays a role in virion morphogenesis and mediates the contact with the nucleocapsid like a matrix protein. Functionally, the middle envelope protein plays an important role in the budding of the virion. It is involved in the induction of budding in a nucleocapsid independent way. In this process the majority of envelope proteins bud to form subviral lipoprotein particles of 22 nm of diameter that do not contain a nucleocapsid. The sequence is that of Large envelope protein from Homo sapiens (Human).